Here is a 235-residue protein sequence, read N- to C-terminus: Rab-like protein 3 (235 aa).

Positions 1 to 235 (MASLDRVKVL…GGNFKSLHYD (235 aa)) are small GTPase-like. GTP contacts are provided by residues 16–21 (GVGKSS), 148–150 (KLD), and 179–180 (DC).

The protein belongs to the small GTPase superfamily. Rab family. As to quaternary structure, homodimer.

In terms of biological role, required for KRAS signaling regulation and modulation of cell proliferation. Regulator of KRAS prenylation, and probably prenylation of other small GTPases. Required for lymphocyte development and function. Not required for myeloid cell development. This chain is Rab-like protein 3 (rabl3), found in Xenopus laevis (African clawed frog).